The following is a 1779-amino-acid chain: MSASRSSTKFSTPAEGSDNGKEFTTPATSTEGHEVPDRPGDALADVAIIGMACRTPGDVRSPDSLWQYLLKKGDASGSLPDWRWEPYRQRHPRNAALLAQTTAKGYFLDDIDHFDAAFFSISPREAEQMDPQQRLALEVAWEALENAGISPPQLAGSNTSVYMGVNSDDYAKLLLEDLPNVDAHMGVGTAYCGIPSRISYILDLMGPSVALDAACASSLVAVHHARQAIRAGETDLAIAGGVNALLGPGLTRVLDEAGAISTDGKCRSFDETASGYGRGEGAGVVILKRLDKALADGDHVLAVLKGSAVASDGKTLGIMAPNARAQLLVAQKALAEAKVSADSINYVEAHATSTSLGDPTETNALAEVYGAGSGRSPSDPCYIGSIKPNIGHLEAGAGVMGLIKAVLVLRHGQVPPQANLKTLNSKIAWNENLLCPPRELVTLPCPGPIHPLRAAVASYGYSGTVSHAVLEAFAGHSEFAERLSQIPTGDDPSPVLLLISAPQARRVSAAAGALKQWLSENEASISLKTVSSTLAQRRAHHRYRHAIVADSVPDAIAALDDVSKEAPNRWVIKDKIDSKAAKGPVWIFSGHGAQWADMGRELFESSPAFEEVVRNLEPIIQDEVGFSAIETLQKGCPDRSDVVQVMTFLMHLGIAAVLEIESGPPSAVVGHSLGEAAAAVVSGALTWREGALVVCRRARLYRELMGQGAMALVRVSAEEARTRIGRQTGVWVAIETSPSACVLSGEVDAIKQLSDRWREEGIEVRMVASDVPFHTPMLERLAKPLYESLRGELHPRVPNRALFSTSQPDPRSEVLRDAQYWVTNMIQPVRLQSAIAAIAQDGFRALVEVSSHPIVTHSVVETMGECTEDPVLVTPTMVRRQPALKSILAATGRLHCFGCAIKFIELDPNAPWNSSVPSTVWHHQPFYRAVSQTSASSQLETTHDPAANNLLGKRIALWGTEEVLYQTRLEEENRPFPGHHPLHGSEIVPAAVLLRTFLQALTPRCVEQVSLQVPVVVSPARKVQIRHNTRNITITSCLEESSSQEDGSWLVNTTAAVGAANVVPSQSRMDLSELRKRLPQKLADSFSIDYLASVGVSAMGFPWQVTHHVASDDEMLARVDANPDNMGGMNDFLTSLMDAATSISSTLWHRQPLLRMPTSVRRVVAVHEIPIPRVVYIHCTKVASTSECTADVTLTGEDGTVLMEIQGMSFAGLEGESFSRKSTAGLVHQIQWPPAALVEDPSEFSHIAFVTPDITDPRLEQYQSQLDALAITSSVHQAASDLPLTSHTSLAVVYLPQTMTDVFDTATRSCNDLVSIIQTITAAASSTTRVFVLTAGTELGHSALLGLSRIIQAEHPDIWGSLIEVEDTFSLPLMAMRYVRDADVIRIKDGVPRIARLRPLPSASSSLTPLTFSPASTYLITGGLGALGLSVAHWMVTQGARRLLLLSRRALPPRSTWSSTHMNNPTIQSILALERLGATVHCLPIDISLPMAASGLRSTLETLNLPSVAGVIHAAGIVSDQLVEQVTPDVLESVLAPKIKGALNLHDVFPPASLDFFVLFSSCGQLLGFPGQASYASGNAFLDGLARSRRAQGDNAISLLWTTWRGMGMGQSANGAMEAELYARGITDITPDEAFRAWSAVASTGGGGTDHAVIVRARVLEGGEPLPHPILTDIATRKAEVVNAGEHPAGSQEVKLSGRELEQHLRDVINGCVSKTLSVKEDEIDDAVALAEMGMDSVMTVNFRMTLQQTLKVPVGPTLIWKCPTVQHLVKHFTKELDA.

The segment covering 1–11 (MSASRSSTKFS) has biased composition (polar residues). The disordered stretch occupies residues 1-40 (MSASRSSTKFSTPAEGSDNGKEFTTPATSTEGHEVPDRPG). Basic and acidic residues predominate over residues 31-40 (EGHEVPDRPG). The 430-residue stretch at 43–472 (LADVAIIGMA…GTVSHAVLEA (430 aa)) folds into the Ketosynthase family 3 (KS3) domain. Active-site for beta-ketoacyl synthase activity residues include Cys-215, His-350, and His-392. The segment at 586–883 (WIFSGHGAQW…TPTMVRRQPA (298 aa)) is malonyl-CoA:ACP transacylase (MAT) domain. The active-site For acyl/malonyl transferase activity is the Ser-672. The segment at 942 to 1218 (THDPAANNLL…SFAGLEGESF (277 aa)) is product template (PT) domain. The segment at 948 to 1064 (NNLLGKRIAL…AAVGAANVVP (117 aa)) is N-terminal hotdog fold. Residues 948-1219 (NNLLGKRIAL…FAGLEGESFS (272 aa)) form the PKS/mFAS DH domain. The active-site Proton acceptor; for dehydratase activity is the His-980. The tract at residues 1079–1219 (PQKLADSFSI…FAGLEGESFS (141 aa)) is C-terminal hotdog fold. The active-site Proton donor; for dehydratase activity is Asp-1138. Residues 1703–1777 (QHLRDVINGC…HLVKHFTKEL (75 aa)) enclose the Carrier domain. Position 1737 is an O-(pantetheine 4'-phosphoryl)serine (Ser-1737).

It catalyses the reaction 3 malonyl-CoA + acetyl-CoA + NADPH + 3 H(+) = 6-methylsalicylate + 3 CO2 + NADP(+) + 4 CoA + H2O. The protein operates within secondary metabolite biosynthesis; terpenoid biosynthesis. Functionally, non-reducing polyketide synthase; part of the gene cluster that mediates the biosynthesis of yanuthone D, a fungal isoprenoid epoxycyclohexenone that acts as an antibiotic against fungi and bacteria. The first step of the pathway is the synthesis of 6-methylsalicylic acid (6-MSA) by the polyketide synthase yanA. 6-MSA is then converted to m-cresol by the decarboxylase yanB. The cytochrome P450 monooxygenase yanC then catalyzes the oxidation of m-cresol to toluquinol. Epoxidation of toluquinol is then performed by the short chain dehydrogenase yanD, with the help of yanE, and a further prenylation by yanG leads to 7-deacetoxyyanuthone A. The next step is the hydroxylation of C-22 of 7-deacetoxyyanuthone A by the cytochrome P450 monooxygenase yanH to yield 22-deacetylyanuthone A. O-Mevalon transferase yanI then attaches mevalon to the hydroxyl group of 22-deacetylyanuthone A to produce yanuthone E. Finally, the FAD-dependent monooxygenase yanF oxidizes the hydroxyl group at C15 of yanuthone E to form yanuthone D. Furthermore, several branching points in the pathway lead to the production of yanuthones F and G from 7-deacetoxyyanuthone A; yanuthones H and I from 22-deacetylyanuthone A; and yanuthone J from yanuthone E. This chain is 6-methylsalicylic acid synthase, found in Aspergillus niger (strain ATCC 1015 / CBS 113.46 / FGSC A1144 / LSHB Ac4 / NCTC 3858a / NRRL 328 / USDA 3528.7).